Here is a 260-residue protein sequence, read N- to C-terminus: 14-3-3 protein 3 (260 aa).

It belongs to the 14-3-3 family. Homodimer.

The protein is 14-3-3 protein 3 (TFT3) of Solanum lycopersicum (Tomato).